Reading from the N-terminus, the 318-residue chain is Putative fimbrium tip subunit Fim1F (318 aa).

An N-terminal signal peptide occupies residues 1–24 (MRFNVVLFMLIVALLGGLSTCSSE). Residues 25–50 (VPIGFDTDELSFDMSLVLLTGDMQTK) constitute a propeptide that is removed on maturation.

Belongs to the bacteroidetes fimbrillin superfamily. FimA/Mfa1 family. As to quaternary structure, may be part of the fimbrial tip.

The protein localises to the fimbrium. Functionally, putative component of the fimbrium tip. Fimbriae are filamentous appendages on the cell surface that mediate cell adhesion and biofilm formation. The polypeptide is Putative fimbrium tip subunit Fim1F (Parabacteroides distasonis (strain ATCC 8503 / DSM 20701 / CIP 104284 / JCM 5825 / NCTC 11152)).